The primary structure comprises 282 residues: Acetyl-coenzyme A carboxylase carboxyl transferase subunit beta (282 aa).

The 254-residue stretch at 29 to 282 (LMQRCPNCGL…LLKYGGMQDD (254 aa)) folds into the CoA carboxyltransferase N-terminal domain. Cys-33, Cys-36, Cys-51, and Cys-54 together coordinate Zn(2+). The C4-type zinc-finger motif lies at 33 to 54 (CPNCGLEFFARRLDKYKTCPDC).

The protein belongs to the AccD/PCCB family. Acetyl-CoA carboxylase is a heterohexamer composed of biotin carboxyl carrier protein (AccB), biotin carboxylase (AccC) and two subunits each of ACCase subunit alpha (AccA) and ACCase subunit beta (AccD). Requires Zn(2+) as cofactor.

It localises to the cytoplasm. It catalyses the reaction N(6)-carboxybiotinyl-L-lysyl-[protein] + acetyl-CoA = N(6)-biotinyl-L-lysyl-[protein] + malonyl-CoA. It functions in the pathway lipid metabolism; malonyl-CoA biosynthesis; malonyl-CoA from acetyl-CoA: step 1/1. Component of the acetyl coenzyme A carboxylase (ACC) complex. Biotin carboxylase (BC) catalyzes the carboxylation of biotin on its carrier protein (BCCP) and then the CO(2) group is transferred by the transcarboxylase to acetyl-CoA to form malonyl-CoA. The protein is Acetyl-coenzyme A carboxylase carboxyl transferase subunit beta of Lactobacillus delbrueckii subsp. bulgaricus (strain ATCC BAA-365 / Lb-18).